The following is a 475-amino-acid chain: Ribulose bisphosphate carboxylase large chain (475 aa).

Positions 123 and 173 each coordinate substrate. Lysine 175 (proton acceptor) is an active-site residue. Residue lysine 177 participates in substrate binding. The Mg(2+) site is built by lysine 201, aspartate 203, and glutamate 204. Lysine 201 bears the N6-carboxylysine mark. Histidine 294 functions as the Proton acceptor in the catalytic mechanism. 3 residues coordinate substrate: arginine 295, histidine 327, and serine 379.

It belongs to the RuBisCO large chain family. Type I subfamily. Heterohexadecamer of 8 large chains and 8 small chains. Mg(2+) serves as cofactor.

It localises to the plastid. Its subcellular location is the chloroplast. It carries out the reaction 2 (2R)-3-phosphoglycerate + 2 H(+) = D-ribulose 1,5-bisphosphate + CO2 + H2O. The enzyme catalyses D-ribulose 1,5-bisphosphate + O2 = 2-phosphoglycolate + (2R)-3-phosphoglycerate + 2 H(+). RuBisCO catalyzes two reactions: the carboxylation of D-ribulose 1,5-bisphosphate, the primary event in carbon dioxide fixation, as well as the oxidative fragmentation of the pentose substrate in the photorespiration process. Both reactions occur simultaneously and in competition at the same active site. This chain is Ribulose bisphosphate carboxylase large chain, found in Bigelowiella natans (Pedinomonas minutissima).